The sequence spans 248 residues: FCS-Like Zinc finger 14 (248 aa).

Positions 85–94 are enriched in polar residues; that stretch reads VCRSEPNQPG. Residues 85–108 are disordered; sequence VCRSEPNQPGRSDPVQFMSHGGST. Residues 181–224 form an FLZ-type zinc finger; it reads GFLNSCYLCRKKLHGQDIFIYRGEKAFCSTECRSSHIANDERKE.

The protein belongs to the FLZ family. Interacts with KIN10 and KIN11 via its FLZ-type zinc finger domain. Interacts with KINB1, KINB2 and KINB3 via its N-terminal part.

The protein localises to the cytoplasm. It localises to the nucleus. Functionally, may act as an adapter to facilitate the interaction of SnRK1 complex with effector proteins, conferring tissue- and stimulus-type specific differences in the SnRK1 regulation pathway. The protein is FCS-Like Zinc finger 14 of Arabidopsis thaliana (Mouse-ear cress).